The chain runs to 809 residues: Pentatricopeptide repeat-containing protein At1g11290, chloroplastic (809 aa).

A chloroplast-targeting transit peptide spans methionine 1–arginine 46. PPR repeat units follow at residues glutamate 68–lysine 98, leucine 99–proline 133, valine 134–leucine 168, aspartate 169–arginine 199, aspartate 200–proline 234, serine 235–serine 269, leucine 270–arginine 300, asparagine 301–proline 335, threonine 336–arginine 370, asparagine 371–arginine 401, threonine 402–proline 436, aspartate 437–lysine 471, asparagine 472–arginine 502, histidine 503–proline 537, asparagine 538–asparagine 568, and serine 574–lysine 604. Positions valine 609–lysine 684 are type E motif. The interval asparagine 685–lysine 715 is type E(+) motif. The tract at residues glutamate 716–tryptophan 809 is type DYW motif.

This sequence belongs to the PPR family. PCMP-H subfamily.

It localises to the plastid. The protein localises to the chloroplast. Functionally, involved in multiple sites RNA editing events in chloroplasts. Involved in the editing of the site 7 of ndhB (ndhB-7) and site 5 of ndhD (ndhD-5) transcripts, which are two plastid-encoded subunits of the chloroplast NAD(P)H dehydrogenase (NDH) complex. Involved in the editing of the site 3 of rpoB (rpoB-3) transcript. Required for the activity of the NDH complex of the photosynthetic electron transport chain. Possesses low endoribonuclease activity in vitro. This chain is Pentatricopeptide repeat-containing protein At1g11290, chloroplastic (PCMP-H40), found in Arabidopsis thaliana (Mouse-ear cress).